The primary structure comprises 96 residues: Cytoplasmic envelopment protein 3 (96 aa).

A lipid anchor (N-myristoyl glycine; by host) is attached at Gly-2. The asp/Glu-rich (acidic) stretch occupies residues Asp-37–Glu-43. Ser-40 bears the Phosphoserine mark. The tract at residues Pro-50 to Glu-96 is disordered. Residues Arg-65 to Val-81 show a composition bias toward basic and acidic residues.

It belongs to the herpesviridae cytoplasmic envelopment protein 3 family. As to quaternary structure, interacts with cytoplasmic envelopment protein 2; this interaction is essential for the proper localization of each protein to the assembly complex and thus for the production of infectious virus. Interacts with gE (via C-terminus). Interacts with gD (via C-terminus). Interacts with UL56. Myristoylation and palmitoylation (probably on one or more of the nearby cysteines at the N-terminus) enable membrane-binding and Golgi apparatus-specific targeting and are essential for efficient packaging. In terms of processing, phosphorylated. Phosphorylation does not seem to be required for recycling to the host Golgi apparatus. Packaging is selective for underphosphorylated forms.

Its subcellular location is the virion tegument. The protein localises to the virion membrane. It is found in the host cell membrane. It localises to the host Golgi apparatus membrane. In terms of biological role, plays an important role in the cytoplasmic envelopment of tegument proteins and capsids during the assembly and egress processes. Also participates in viral entry at the fusion step probably by regulating the core fusion machinery. The sequence is that of Cytoplasmic envelopment protein 3 from Homo sapiens (Human).